We begin with the raw amino-acid sequence, 212 residues long: uncharacterized protein (212 aa).

A helical transmembrane segment spans residues 5-25 (IFIILIAVLLIGVNIKKIAAA).

It is found in the membrane. This is an uncharacterized protein from Borreliella burgdorferi (strain ATCC 35210 / DSM 4680 / CIP 102532 / B31) (Borrelia burgdorferi).